The chain runs to 383 residues: Guanine nucleotide-binding protein G(s) subunit alpha (383 aa).

Residues 1-31 form a disordered region; that stretch reads MGCFGSAGSKQSDSNSSEDTKSQKRRSDAIT. A lipid anchor (N-palmitoyl glycine) is attached at glycine 2. Cysteine 3 is lipidated: S-palmitoyl cysteine. The segment covering 8–17 has biased composition (polar residues); the sequence is GSKQSDSNSS. Over residues 18 to 31 the composition is skewed to basic and acidic residues; it reads EDTKSQKRRSDAIT. The region spanning 43–383 is the G-alpha domain; the sequence is ATHRLLLLGA…RMHLRQYELL (341 aa). Residues 46–59 form a G1 motif region; that stretch reads RLLLLGAGESGKST. GTP contacts are provided by residues 51 to 58, 187 to 193, 212 to 216, 281 to 284, and alanine 355; these read GAGESGKS, LRCRVLT, DVGGQ, and NKQD. Mg(2+) contacts are provided by serine 58 and threonine 193. The tract at residues 185–193 is G2 motif; the sequence is DILRCRVLT. Residues 208 to 217 form a G3 motif region; that stretch reads FHMFDVGGQR. A G4 motif region spans residues 277-284; the sequence is ILFLNKQD. The tract at residues 353–358 is G5 motif; the sequence is TCAVDT.

It belongs to the G-alpha family. G(s) subfamily. As to quaternary structure, g proteins are composed of 3 units; alpha, beta and gamma. The alpha chain contains the guanine nucleotide binding site.

Functionally, guanine nucleotide-binding proteins (G proteins) are involved as modulators or transducers in various transmembrane signaling systems. The G(s) protein is involved in hormonal regulation of adenylate cyclase: it activates the cyclase. Participates in olfactory signal transduction. This Anopheles gambiae (African malaria mosquito) protein is Guanine nucleotide-binding protein G(s) subunit alpha.